The primary structure comprises 149 residues: Small ribosomal subunit protein uS13 (149 aa).

The protein belongs to the universal ribosomal protein uS13 family. In terms of assembly, part of the 30S ribosomal subunit. Forms a loose heterodimer with protein S19. Forms two bridges to the 50S subunit in the 70S ribosome.

Functionally, located at the top of the head of the 30S subunit, it contacts several helices of the 16S rRNA. In the 70S ribosome it contacts the 23S rRNA (bridge B1a) and protein L5 of the 50S subunit (bridge B1b), connecting the 2 subunits; these bridges are implicated in subunit movement. This chain is Small ribosomal subunit protein uS13, found in Thermococcus kodakarensis (strain ATCC BAA-918 / JCM 12380 / KOD1) (Pyrococcus kodakaraensis (strain KOD1)).